Reading from the N-terminus, the 398-residue chain is Membrane-spanning 4-domains subfamily A member 18 (398 aa).

4 helical membrane passes run 156 to 176 (LGAI…NPVL), 178 to 198 (YYPF…SYIV), 218 to 238 (SISF…IIIT), and 251 to 271 (AVSG…CVVS). The interval 316–346 (TGPVSATNGPVNTTIHPVNTTTSPVNTTTSP) is disordered. Positions 319–331 (VSATNGPVNTTIH) are enriched in polar residues. Low complexity predominate over residues 332–346 (PVNTTTSPVNTTTSP).

It belongs to the MS4A family.

The protein localises to the membrane. This is Membrane-spanning 4-domains subfamily A member 18 (MS4A18) from Homo sapiens (Human).